The chain runs to 108 residues: Translation initiation factor 1A (108 aa).

Positions 11 to 85 constitute an S1-like domain; the sequence is PSKDVPKPEE…TKADIVYRYM (75 aa).

This sequence belongs to the eIF-1A family.

Its function is as follows. Seems to be required for maximal rate of protein biosynthesis. Enhances ribosome dissociation into subunits and stabilizes the binding of the initiator Met-tRNA(I) to 40 S ribosomal subunits. This is Translation initiation factor 1A (eIF1A) from Metallosphaera sedula (strain ATCC 51363 / DSM 5348 / JCM 9185 / NBRC 15509 / TH2).